A 466-amino-acid chain; its full sequence is UDP-N-acetylmuramoylalanine--D-glutamate ligase (466 aa).

121–127 is a binding site for ATP; sequence GTNGKST.

It belongs to the MurCDEF family.

The protein localises to the cytoplasm. The catalysed reaction is UDP-N-acetyl-alpha-D-muramoyl-L-alanine + D-glutamate + ATP = UDP-N-acetyl-alpha-D-muramoyl-L-alanyl-D-glutamate + ADP + phosphate + H(+). It participates in cell wall biogenesis; peptidoglycan biosynthesis. Cell wall formation. Catalyzes the addition of glutamate to the nucleotide precursor UDP-N-acetylmuramoyl-L-alanine (UMA). The chain is UDP-N-acetylmuramoylalanine--D-glutamate ligase from Nitrobacter hamburgensis (strain DSM 10229 / NCIMB 13809 / X14).